The chain runs to 185 residues: Large ribosomal subunit protein uL5 (185 aa).

The protein belongs to the universal ribosomal protein uL5 family. As to quaternary structure, part of the 50S ribosomal subunit; part of the 5S rRNA/L5/L18/L25 subcomplex. Contacts the 5S rRNA and the P site tRNA. Forms a bridge to the 30S subunit in the 70S ribosome.

Functionally, this is one of the proteins that bind and probably mediate the attachment of the 5S RNA into the large ribosomal subunit, where it forms part of the central protuberance. In the 70S ribosome it contacts protein S13 of the 30S subunit (bridge B1b), connecting the 2 subunits; this bridge is implicated in subunit movement. Contacts the P site tRNA; the 5S rRNA and some of its associated proteins might help stabilize positioning of ribosome-bound tRNAs. The protein is Large ribosomal subunit protein uL5 of Treponema pallidum (strain Nichols).